The chain runs to 199 residues: Large ribosomal subunit protein bL25 (199 aa).

Belongs to the bacterial ribosomal protein bL25 family. CTC subfamily. As to quaternary structure, part of the 50S ribosomal subunit; part of the 5S rRNA/L5/L18/L25 subcomplex. Contacts the 5S rRNA. Binds to the 5S rRNA independently of L5 and L18.

Its function is as follows. This is one of the proteins that binds to the 5S RNA in the ribosome where it forms part of the central protuberance. In Chloroherpeton thalassium (strain ATCC 35110 / GB-78), this protein is Large ribosomal subunit protein bL25.